The following is a 162-amino-acid chain: NADH-quinone oxidoreductase subunit I (162 aa).

4Fe-4S ferredoxin-type domains follow at residues 52-82 and 93-122; these read LRRY…IEAG and TRYD…EGPN. Residues Cys-62, Cys-65, Cys-68, Cys-72, Cys-102, Cys-105, Cys-108, and Cys-112 each contribute to the [4Fe-4S] cluster site.

The protein belongs to the complex I 23 kDa subunit family. As to quaternary structure, NDH-1 is composed of 14 different subunits. Subunits NuoA, H, J, K, L, M, N constitute the membrane sector of the complex. Requires [4Fe-4S] cluster as cofactor.

Its subcellular location is the cell inner membrane. It catalyses the reaction a quinone + NADH + 5 H(+)(in) = a quinol + NAD(+) + 4 H(+)(out). In terms of biological role, NDH-1 shuttles electrons from NADH, via FMN and iron-sulfur (Fe-S) centers, to quinones in the respiratory chain. The immediate electron acceptor for the enzyme in this species is believed to be ubiquinone. Couples the redox reaction to proton translocation (for every two electrons transferred, four hydrogen ions are translocated across the cytoplasmic membrane), and thus conserves the redox energy in a proton gradient. This Methylobacterium sp. (strain 4-46) protein is NADH-quinone oxidoreductase subunit I.